A 361-amino-acid chain; its full sequence is 3-dehydroquinate synthase (361 aa).

Residues 107–111, 131–132, lysine 144, and lysine 153 contribute to the NAD(+) site; these read GVIGD and TS. The Zn(2+) site is built by glutamate 186, histidine 251, and histidine 268.

It belongs to the sugar phosphate cyclases superfamily. Dehydroquinate synthase family. It depends on NAD(+) as a cofactor. Requires Co(2+) as cofactor. Zn(2+) serves as cofactor.

It is found in the cytoplasm. It carries out the reaction 7-phospho-2-dehydro-3-deoxy-D-arabino-heptonate = 3-dehydroquinate + phosphate. It participates in metabolic intermediate biosynthesis; chorismate biosynthesis; chorismate from D-erythrose 4-phosphate and phosphoenolpyruvate: step 2/7. Catalyzes the conversion of 3-deoxy-D-arabino-heptulosonate 7-phosphate (DAHP) to dehydroquinate (DHQ). The polypeptide is 3-dehydroquinate synthase (Synechocystis sp. (strain ATCC 27184 / PCC 6803 / Kazusa)).